We begin with the raw amino-acid sequence, 309 residues long: Glutaminase (309 aa).

Substrate contacts are provided by Ser65, Asn117, Glu162, Asn169, Tyr193, Tyr245, and Val263.

This sequence belongs to the glutaminase family. As to quaternary structure, homotetramer.

It carries out the reaction L-glutamine + H2O = L-glutamate + NH4(+). This Bacillus cytotoxicus (strain DSM 22905 / CIP 110041 / 391-98 / NVH 391-98) protein is Glutaminase.